We begin with the raw amino-acid sequence, 598 residues long: UvrABC system protein C (598 aa).

Positions 13 to 92 constitute a GIY-YIG domain; sequence SSPGVYLMKD…IKKYQPRYNV (80 aa). The UVR domain occupies 206–241; the sequence is DTTIANLEEAIKKASQEHKFEHAAALYRTLTLIRQT.

This sequence belongs to the UvrC family. In terms of assembly, interacts with UvrB in an incision complex.

It localises to the cytoplasm. Its function is as follows. The UvrABC repair system catalyzes the recognition and processing of DNA lesions. UvrC both incises the 5' and 3' sides of the lesion. The N-terminal half is responsible for the 3' incision and the C-terminal half is responsible for the 5' incision. This chain is UvrABC system protein C, found in Chlamydia muridarum (strain MoPn / Nigg).